A 328-amino-acid chain; its full sequence is ABC transporter I family member 20 (328 aa).

Residues 14 to 257 enclose the ABC transporter domain; that stretch reads VEISGLRFTY…SKKSLMRTVE (244 aa). 55–62 provides a ligand contact to ATP; the sequence is GSNGAGKT. The segment at 263–295 is disordered; it reads ERDEERKRRKERKANGLPEFETRTEESRVTGDP. Basic and acidic residues predominate over residues 282-291; that stretch reads FETRTEESRV.

This sequence belongs to the ABC transporter superfamily. ABCI family.

Its subcellular location is the cytoplasm. The chain is ABC transporter I family member 20 (ABCI20) from Arabidopsis thaliana (Mouse-ear cress).